Reading from the N-terminus, the 162-residue chain is ATP synthase subunit b', chloroplastic (162 aa).

A helical transmembrane segment spans residues 26-46 (ATLPLQALQFILLTVLLTFIF).

The protein belongs to the ATPase B chain family. In terms of assembly, F-type ATPases have 2 components, F(1) - the catalytic core - and F(0) - the membrane proton channel. F(1) has five subunits: alpha(3), beta(3), gamma(1), delta(1), epsilon(1). F(0) has four main subunits: a(1), b(1), b'(1) and c(10-14). The alpha and beta chains form an alternating ring which encloses part of the gamma chain. F(1) is attached to F(0) by a central stalk formed by the gamma and epsilon chains, while a peripheral stalk is formed by the delta, b and b' chains.

It localises to the plastid. Its subcellular location is the chloroplast thylakoid membrane. Its function is as follows. F(1)F(0) ATP synthase produces ATP from ADP in the presence of a proton or sodium gradient. F-type ATPases consist of two structural domains, F(1) containing the extramembraneous catalytic core and F(0) containing the membrane proton channel, linked together by a central stalk and a peripheral stalk. During catalysis, ATP synthesis in the catalytic domain of F(1) is coupled via a rotary mechanism of the central stalk subunits to proton translocation. In terms of biological role, component of the F(0) channel, it forms part of the peripheral stalk, linking F(1) to F(0). The b'-subunit is a diverged and duplicated form of b found in plants and photosynthetic bacteria. In Emiliania huxleyi (Coccolithophore), this protein is ATP synthase subunit b', chloroplastic.